The chain runs to 430 residues: tRNA(Ile)-lysidine synthase (430 aa).

Residue 21 to 26 (SGGLDS) coordinates ATP.

It belongs to the tRNA(Ile)-lysidine synthase family.

It localises to the cytoplasm. It carries out the reaction cytidine(34) in tRNA(Ile2) + L-lysine + ATP = lysidine(34) in tRNA(Ile2) + AMP + diphosphate + H(+). In terms of biological role, ligates lysine onto the cytidine present at position 34 of the AUA codon-specific tRNA(Ile) that contains the anticodon CAU, in an ATP-dependent manner. Cytidine is converted to lysidine, thus changing the amino acid specificity of the tRNA from methionine to isoleucine. The sequence is that of tRNA(Ile)-lysidine synthase from Salmonella heidelberg (strain SL476).